The following is a 201-amino-acid chain: LexA repressor (201 aa).

Positions 28-48 form a DNA-binding region, H-T-H motif; sequence LREIGGHLGINGTLGVMKHLD. Active-site for autocatalytic cleavage activity residues include Ser120 and Lys157.

The protein belongs to the peptidase S24 family. Homodimer.

It catalyses the reaction Hydrolysis of Ala-|-Gly bond in repressor LexA.. In terms of biological role, represses a number of genes involved in the response to DNA damage (SOS response), including recA and lexA. In the presence of single-stranded DNA, RecA interacts with LexA causing an autocatalytic cleavage which disrupts the DNA-binding part of LexA, leading to derepression of the SOS regulon and eventually DNA repair. This is LexA repressor from Geotalea uraniireducens (strain Rf4) (Geobacter uraniireducens).